Reading from the N-terminus, the 520-residue chain is Sodium-dependent dicarboxylate transporter SdcS (520 aa).

Transmembrane regions (helical) follow at residues 30–50 (AGQL…LLFF), 55–75 (LPWK…WWIT), 77–97 (AIPI…GHIL), 104–124 (SEYG…AIAM), 160–180 (SMFV…LAII), 207–227 (IGYA…PLII), 242–262 (FAKW…ITWL), 298–318 (KVVQ…EFLL), 323–343 (VTSS…LFII), 362–382 (ELPW…KGIS), 399–419 (GVSP…LTEV), 428–448 (MILP…LLLM), 452–472 (AMAA…AIIF), and 491–511 (LISA…VLGI).

Belongs to the SLC13A/DASS transporter (TC 2.A.47) family. NADC subfamily.

Its subcellular location is the cell membrane. In terms of biological role, mediates the transport of the dicarboxylates fumarate, malate, and succinate across the cytoplasmic membrane via a Na(+)-electrochemical gradient. This Staphylococcus aureus (strain NCTC 8325 / PS 47) protein is Sodium-dependent dicarboxylate transporter SdcS (sdcS).